Reading from the N-terminus, the 198-residue chain is ATP synthase subunit b (198 aa).

A helical membrane pass occupies residues 49-67 (IWKWANFLILAGGLGYLVG).

The protein belongs to the ATPase B chain family. In terms of assembly, F-type ATPases have 2 components, F(1) - the catalytic core - and F(0) - the membrane proton channel. F(1) has five subunits: alpha(3), beta(3), gamma(1), delta(1), epsilon(1). F(0) has three main subunits: a(1), b(2) and c(10-14). The alpha and beta chains form an alternating ring which encloses part of the gamma chain. F(1) is attached to F(0) by a central stalk formed by the gamma and epsilon chains, while a peripheral stalk is formed by the delta and b chains.

The protein resides in the cell inner membrane. In terms of biological role, f(1)F(0) ATP synthase produces ATP from ADP in the presence of a proton or sodium gradient. F-type ATPases consist of two structural domains, F(1) containing the extramembraneous catalytic core and F(0) containing the membrane proton channel, linked together by a central stalk and a peripheral stalk. During catalysis, ATP synthesis in the catalytic domain of F(1) is coupled via a rotary mechanism of the central stalk subunits to proton translocation. Its function is as follows. Component of the F(0) channel, it forms part of the peripheral stalk, linking F(1) to F(0). This is ATP synthase subunit b from Solibacter usitatus (strain Ellin6076).